The chain runs to 200 residues: Cytochrome c biogenesis ATP-binding export protein CcmA (200 aa).

The ABC transporter domain occupies 2 to 200 (LDVIELDFDY…NKADYEEYHL (199 aa)). 34-41 (GSNGAGKT) contributes to the ATP binding site.

This sequence belongs to the ABC transporter superfamily. CcmA exporter (TC 3.A.1.107) family. The complex is composed of two ATP-binding proteins (CcmA) and two transmembrane proteins (CcmB).

It is found in the cell inner membrane. The enzyme catalyses heme b(in) + ATP + H2O = heme b(out) + ADP + phosphate + H(+). Functionally, part of the ABC transporter complex CcmAB involved in the biogenesis of c-type cytochromes; once thought to export heme, this seems not to be the case, but its exact role is uncertain. Responsible for energy coupling to the transport system. This is Cytochrome c biogenesis ATP-binding export protein CcmA from Legionella pneumophila.